The following is a 120-amino-acid chain: Spermidine export protein MdtJ (120 aa).

The next 4 membrane-spanning stretches (helical) occupy residues 1–21 (MFYW…TLSM), 31–51 (AGYI…SFAV), 54–74 (IALG…ITVF), and 81–101 (EVLS…IVLI).

The protein belongs to the drug/metabolite transporter (DMT) superfamily. Small multidrug resistance (SMR) (TC 2.A.7.1) family. MdtJ subfamily. In terms of assembly, forms a complex with MdtI.

Its subcellular location is the cell inner membrane. Functionally, catalyzes the excretion of spermidine. In Salmonella arizonae (strain ATCC BAA-731 / CDC346-86 / RSK2980), this protein is Spermidine export protein MdtJ.